Here is a 1142-residue protein sequence, read N- to C-terminus: ABC transporter F family member 4 (1142 aa).

Residues 1–564 (MGPKGKKKGQ…EDAFELAKKK (564 aa)) form a disordered region. Composition is skewed to low complexity over residues 121–143 (PQPVKKGGKPAPQKKGGKQQQQQ), 153–166 (PQPVKKGGKPAPQK), and 182–195 (PQPVKKGGKPAPQK). Acidic residues-rich tracts occupy residues 203–212 (SEDEDEEDEV) and 233–244 (EEEEEEEEEEIE). Basic residues-rich tracts occupy residues 249–261 (KGGKAPKPKKGGK) and 280–290 (KGGKKDKKKGS). Acidic residues predominate over residues 295 to 306 (EEEEEEEEEEIE). The segment covering 314–328 (NKKDQKKGGKGKHVE) has biased composition (basic and acidic residues). A compositionally biased stretch (acidic residues) spans 329 to 340 (EEEEEEEEEEIE). Positions 377–387 (KGGKKDKKKGS) are enriched in basic residues. 2 stretches are compositionally biased toward acidic residues: residues 392–404 (EEEEEEEEEEEIE) and 441–451 (EEEEQEQEEEE). Residues 456 to 467 (SKSNKKDKKKGK) show a composition bias toward basic residues. Residues 471-480 (EEEEEEEEEE) show a composition bias toward acidic residues. A compositionally biased stretch (basic residues) spans 485–496 (SKSNKKDKKKGS). Positions 501–518 (EEEEEEEEEEEEEKEEEE) are enriched in acidic residues. The span at 530–548 (AKKVKKVDKKEKKKEKEKK) shows a compositional bias: basic residues. 2 ABC transporter domains span residues 604 to 857 (IKFD…RSKE) and 923 to 1139 (LVFK…DNMV). Residues 636–643 (GRNGIGKS) and 956–963 (GMNGVGKS) each bind ATP.

The protein belongs to the ABC transporter superfamily.

This Dictyostelium discoideum (Social amoeba) protein is ABC transporter F family member 4 (abcF4).